Here is a 499-residue protein sequence, read N- to C-terminus: Na(+)/H(+) antiporter NhaB (499 aa).

A run of 12 helical transmembrane segments spans residues 38 to 58, 62 to 82, 89 to 109, 128 to 148, 149 to 169, 204 to 224, 242 to 262, 310 to 330, 349 to 369, 393 to 413, 449 to 469, and 478 to 498; these read VSPF…LAMA, YPLQ…LTSA, VLAN…IYFM, LLLS…LDAL, TVTA…HRFA, LIMH…VGEP, LVMA…CAIL, VLVF…LLII, FEEA…VAVI, MFFV…VATV, ATPN…APLI, and IMAL…VILF.

The protein belongs to the NhaB Na(+)/H(+) (TC 2.A.34) antiporter family.

The protein localises to the cell inner membrane. It carries out the reaction 2 Na(+)(in) + 3 H(+)(out) = 2 Na(+)(out) + 3 H(+)(in). In terms of biological role, na(+)/H(+) antiporter that extrudes sodium in exchange for external protons. The polypeptide is Na(+)/H(+) antiporter NhaB (Saccharophagus degradans (strain 2-40 / ATCC 43961 / DSM 17024)).